Consider the following 201-residue polypeptide: 3-isopropylmalate dehydratase small subunit (201 aa).

This sequence belongs to the LeuD family. LeuD type 1 subfamily. As to quaternary structure, heterodimer of LeuC and LeuD.

The enzyme catalyses (2R,3S)-3-isopropylmalate = (2S)-2-isopropylmalate. Its pathway is amino-acid biosynthesis; L-leucine biosynthesis; L-leucine from 3-methyl-2-oxobutanoate: step 2/4. Functionally, catalyzes the isomerization between 2-isopropylmalate and 3-isopropylmalate, via the formation of 2-isopropylmaleate. This is 3-isopropylmalate dehydratase small subunit from Glaesserella parasuis serovar 5 (strain SH0165) (Haemophilus parasuis).